The primary structure comprises 184 residues: Ribosome-recycling factor (184 aa).

This sequence belongs to the RRF family.

The protein localises to the cytoplasm. Functionally, responsible for the release of ribosomes from messenger RNA at the termination of protein biosynthesis. May increase the efficiency of translation by recycling ribosomes from one round of translation to another. This Borreliella afzelii (strain PKo) (Borrelia afzelii) protein is Ribosome-recycling factor.